Consider the following 404-residue polypeptide: Deoxyguanosinetriphosphate triphosphohydrolase-like protein (404 aa).

The tract at residues 1-33 is disordered; that stretch reads MSVGMAAPRAAYGCDPDRSRGRQFAEPPSNNRS. The HD domain maps to 69-217; the sequence is RLTHSLEVAQ…AAIADDIAYD (149 aa).

Belongs to the dGTPase family. Type 2 subfamily.

The sequence is that of Deoxyguanosinetriphosphate triphosphohydrolase-like protein from Rhodopseudomonas palustris (strain BisB5).